The primary structure comprises 464 residues: Cysteine--tRNA ligase (464 aa).

Position 29 (C29) interacts with Zn(2+). The short motif at 31–41 is the 'HIGH' region element; that stretch reads ATVQGDPHIGH. Zn(2+)-binding residues include C207, H232, and E236. The 'KMSKS' region signature appears at 263–267; it reads KMSKS. K266 contributes to the ATP binding site.

The protein belongs to the class-I aminoacyl-tRNA synthetase family. As to quaternary structure, monomer. The cofactor is Zn(2+).

It localises to the cytoplasm. It catalyses the reaction tRNA(Cys) + L-cysteine + ATP = L-cysteinyl-tRNA(Cys) + AMP + diphosphate. This Rhodococcus jostii (strain RHA1) protein is Cysteine--tRNA ligase.